The sequence spans 325 residues: MPNIVLFSGSSHHDLSQRVADRLGLELGKVVTKKFSNQETSVEIGESVRGEDVYIIQSGCGEINDNLMELLIMINACKIASSSRVTAVIPCFPYARQDKKDKKGAVERWSRAPISAKLVANMLSVAGADHIITMDLHASQIQGFFDIPVDNLYAEPAVLQWIKENILEWKNCIIVSPDAGGAKRVTSIADRLNVEFALIHKERKKANEVDRMVLVGDVKDRVAILVDDMADTCGTICHAADKLVSAGATKVYAILTHGIFSGPAISRINNAAFEAVVVTNTIPQEEKMKHCPKIQFIDISMILAEAIRRTHNGESVSYLFSHVPL.

96–101 (RQDKKD) serves as a coordination point for ATP. Mg(2+)-binding residues include Asp-135, His-137, Asp-146, and Asp-150. Residue His-137 participates in ATP binding. The interval 219 to 234 (KDRVAILVDDMADTCG) is binding of phosphoribosylpyrophosphate.

This sequence belongs to the ribose-phosphate pyrophosphokinase family. In terms of assembly, homodimer. The active form is probably a hexamer composed of 3 homodimers. Requires Mg(2+) as cofactor.

The enzyme catalyses D-ribose 5-phosphate + ATP = 5-phospho-alpha-D-ribose 1-diphosphate + AMP + H(+). It functions in the pathway metabolic intermediate biosynthesis; 5-phospho-alpha-D-ribose 1-diphosphate biosynthesis; 5-phospho-alpha-D-ribose 1-diphosphate from D-ribose 5-phosphate (route I): step 1/1. Activated by magnesium and inorganic phosphate. Competitively or non-competitively inhibited by ADP, 2,3-bisphosphoglyceride or GDP. Catalyzes the synthesis of phosphoribosylpyrophosphate (PRPP) that is essential for nucleotide synthesis. The polypeptide is Ribose-phosphate pyrophosphokinase 2 (PRPS2) (Gallus gallus (Chicken)).